Consider the following 59-residue polypeptide: Potassium channel toxin alpha-KTx 16.7 (59 aa).

A signal peptide spans 1 to 22 (MKILSILLIALVICSISICTEA). Disulfide bonds link C30-C51, C36-C56, and C40-C58.

Belongs to the short scorpion toxin superfamily. Potassium channel inhibitor family. Alpha-KTx 16 subfamily. As to expression, expressed by the venom gland.

Its subcellular location is the secreted. Its function is as follows. May play a role in blocking voltage-gated potassium channels Kv1.2/KCNA2, and Kv1.3/KCNA3. Blocks the voltage-gated potassium channel Kv1.3/KCNA3, with an IC(50) of 118.3 +-55.8 nM. The chain is Potassium channel toxin alpha-KTx 16.7 from Mesobuthus gibbosus (Mediterranean checkered scorpion).